Here is a 436-residue protein sequence, read N- to C-terminus: GTPase Der (436 aa).

EngA-type G domains lie at 4-165 and 172-347; these read NVIA…NFDS and FKLS…ENLE. Residues 10–17, 57–61, 119–122, 178–185, 225–229, and 290–293 each bind GTP; these read GKPNVGKS, DTGGI, NKLD, GQPNSGKS, DTAGI, and NKWD. The region spanning 348-432 is the KH-like domain; the sequence is REIKPSVLTN…PINIIFKNKS (85 aa).

The protein belongs to the TRAFAC class TrmE-Era-EngA-EngB-Septin-like GTPase superfamily. EngA (Der) GTPase family. In terms of assembly, associates with the 50S ribosomal subunit.

In terms of biological role, GTPase that plays an essential role in the late steps of ribosome biogenesis. The chain is GTPase Der from Mycoplasmopsis agalactiae (strain NCTC 10123 / CIP 59.7 / PG2) (Mycoplasma agalactiae).